The following is a 734-amino-acid chain: Casein kinase II subunit alpha'-interacting protein (734 aa).

Residues 608–654 (SLLPSTSSSTSSSSTTSSSSSVASASSDSSSSSSSSSSFSISSSSSP) are disordered. Low complexity predominate over residues 612-654 (STSSSTSSSSTTSSSSSVASASSDSSSSSSSSSSFSISSSSSP).

Interacts (via C-terminus) with CSNK2A2. Phosphorylated by CK2 (casein kinase II), specifically by complexes containing catalytic subunit CSNK2A2.

Its subcellular location is the nucleus. Functionally, may play a role in chromatin regulation of male germ cells. This is Casein kinase II subunit alpha'-interacting protein from Homo sapiens (Human).